The sequence spans 112 residues: Large ribosomal subunit protein P1w (112 aa).

The interval 85–112 (AAAPAAEEKKKDEPAEESDGDLGFGLFD) is disordered. S102 is modified (phosphoserine).

The protein belongs to the eukaryotic ribosomal protein P1/P2 family. In terms of assembly, P1 and P2 exist as dimers at the large ribosomal subunit.

Functionally, plays an important role in the elongation step of protein synthesis. This Arabidopsis thaliana (Mouse-ear cress) protein is Large ribosomal subunit protein P1w (RPP1A).